Here is a 178-residue protein sequence, read N- to C-terminus: NAD(P)H-quinone oxidoreductase subunit J (178 aa).

The protein belongs to the complex I 30 kDa subunit family. As to quaternary structure, NDH-1 can be composed of about 15 different subunits; different subcomplexes with different compositions have been identified which probably have different functions.

The protein resides in the cellular thylakoid membrane. The catalysed reaction is a plastoquinone + NADH + (n+1) H(+)(in) = a plastoquinol + NAD(+) + n H(+)(out). It catalyses the reaction a plastoquinone + NADPH + (n+1) H(+)(in) = a plastoquinol + NADP(+) + n H(+)(out). Its function is as follows. NDH-1 shuttles electrons from an unknown electron donor, via FMN and iron-sulfur (Fe-S) centers, to quinones in the respiratory and/or the photosynthetic chain. The immediate electron acceptor for the enzyme in this species is believed to be plastoquinone. Couples the redox reaction to proton translocation, and thus conserves the redox energy in a proton gradient. Cyanobacterial NDH-1 also plays a role in inorganic carbon-concentration. The sequence is that of NAD(P)H-quinone oxidoreductase subunit J from Crocosphaera subtropica (strain ATCC 51142 / BH68) (Cyanothece sp. (strain ATCC 51142)).